Reading from the N-terminus, the 248-residue chain is PF03932 family protein CutC (248 aa).

This sequence belongs to the CutC family.

Its subcellular location is the cytoplasm. In Photorhabdus laumondii subsp. laumondii (strain DSM 15139 / CIP 105565 / TT01) (Photorhabdus luminescens subsp. laumondii), this protein is PF03932 family protein CutC.